A 970-amino-acid polypeptide reads, in one-letter code: GEM-interacting protein (970 aa).

At S19 the chain carries Phosphoserine. Disordered stretches follow at residues 44 to 76 (PLLS…EGPV), 224 to 263 (SEDL…AQAK), and 377 to 478 (PLDI…ENGL). Over residues 56–65 (PTATVTNEAS) the composition is skewed to polar residues. Phosphoserine is present on residues S71, S231, S234, S243, S437, and S441. The 264-residue stretch at 81 to 344 (EELDLRLIRT…CCAPFEPGQR (264 aa)) folds into the F-BAR domain. Positions 231-246 (SQGSPEDSAPQASPGP) are enriched in polar residues. Over residues 459–472 (SSDDFEERDPDLGD) the composition is skewed to acidic residues. A Phorbol-ester/DAG-type zinc finger spans residues 493–537 (THQLRRLRGPAKCRECEAFMVSGTECEECFLTCHKRCLETLLILC). A Rho-GAP domain is found at 554 to 757 (LQLPRDFPEE…FLIVHYEQIF (204 aa)). Phosphothreonine is present on T660. Residues 762 to 878 (LPQATEPPPQ…PVKYPRGGVR (117 aa)) are disordered. Residues 766–778 (TEPPPQDSSPAPG) are compositionally biased toward pro residues. Positions 815–830 (EQHPTATPTEIPTPQS) are enriched in polar residues. The segment covering 831-844 (DQREDVAEDTKDGG) has biased composition (basic and acidic residues). Residues 847-863 (VSSQGPEDSLLGTQSRG) show a composition bias toward polar residues. Residues S885, S907, S914, S919, and S923 each carry the phosphoserine modification. Residues 897–932 (ETPITSVPRGSLRGRGPSPAAASPEGSPLRRTPLPK) are disordered. A compositionally biased stretch (low complexity) spans 910 to 923 (GRGPSPAAASPEGS).

As to quaternary structure, interacts with GEM through its N-terminal.

Its function is as follows. Stimulates, in vitro and in vivo, the GTPase activity of RhoA. This Homo sapiens (Human) protein is GEM-interacting protein (GMIP).